Here is a 138-residue protein sequence, read N- to C-terminus: Putative pre-16S rRNA nuclease (138 aa).

Belongs to the YqgF nuclease family.

It localises to the cytoplasm. In terms of biological role, could be a nuclease involved in processing of the 5'-end of pre-16S rRNA. The chain is Putative pre-16S rRNA nuclease from Escherichia coli O45:K1 (strain S88 / ExPEC).